The primary structure comprises 207 residues: Ribosomal RNA small subunit methyltransferase G (207 aa).

S-adenosyl-L-methionine is bound by residues Gly-74, Leu-79, 125–126, and Arg-140; that span reads VE.

This sequence belongs to the methyltransferase superfamily. RNA methyltransferase RsmG family.

It is found in the cytoplasm. It catalyses the reaction guanosine(527) in 16S rRNA + S-adenosyl-L-methionine = N(7)-methylguanosine(527) in 16S rRNA + S-adenosyl-L-homocysteine. In terms of biological role, specifically methylates the N7 position of guanine in position 527 of 16S rRNA. In Shewanella piezotolerans (strain WP3 / JCM 13877), this protein is Ribosomal RNA small subunit methyltransferase G.